A 233-amino-acid chain; its full sequence is Adenosylcobinamide-GDP ribazoletransferase (233 aa).

Transmembrane regions (helical) follow at residues 24-44, 46-66, 96-116, 117-137, 156-176, 184-204, and 209-229; these read LWAF…VLYL, LPLS…LLHL, IAGL…LQLV, PFYA…LALA, SGQL…VVVY, LLGL…FGGI, and IGAI…FAGA.

The protein belongs to the CobS family. It depends on Mg(2+) as a cofactor.

Its subcellular location is the cell membrane. The catalysed reaction is alpha-ribazole + adenosylcob(III)inamide-GDP = adenosylcob(III)alamin + GMP + H(+). It carries out the reaction alpha-ribazole 5'-phosphate + adenosylcob(III)inamide-GDP = adenosylcob(III)alamin 5'-phosphate + GMP + H(+). The protein operates within cofactor biosynthesis; adenosylcobalamin biosynthesis; adenosylcobalamin from cob(II)yrinate a,c-diamide: step 7/7. In terms of biological role, joins adenosylcobinamide-GDP and alpha-ribazole to generate adenosylcobalamin (Ado-cobalamin). Also synthesizes adenosylcobalamin 5'-phosphate from adenosylcobinamide-GDP and alpha-ribazole 5'-phosphate. The polypeptide is Adenosylcobinamide-GDP ribazoletransferase (Thermococcus onnurineus (strain NA1)).